Here is a 161-residue protein sequence, read N- to C-terminus: Capsid protein (161 aa).

It belongs to the virgaviridae capsid protein family.

Its subcellular location is the virion. In terms of biological role, capsid protein self-assembles to form rod-shaped virions about 18 nm in diameter with a central canal enclosing the viral genomic RNA. In Tobamovirus Ob, this protein is Capsid protein (CP).